The sequence spans 295 residues: uncharacterized protein (295 aa).

In terms of domain architecture, HTH araC/xylS-type spans 8–106; that stretch reads QKTINWIESH…HMPPGAYRTF (99 aa). A DNA-binding region (H-T-H motif) is located at residues 25 to 46; that stretch reads EDIVNVSSFSKFHFHRIFQKEV.

Functionally, probable transcriptional regulator. This is an uncharacterized protein from Bacillus subtilis (strain 168).